Consider the following 112-residue polypeptide: uncharacterized protein (112 aa).

An N-terminal signal peptide occupies residues 1 to 29 (MINLHRLCIIHVVATLLSTLLSLISVAIS). A glycan (N-linked (GlcNAc...) asparagine) is linked at Asn84. A disordered region spans residues 84-112 (NLSKGYNQRPEGSKEESHMVVKEKRKGDH). Basic and acidic residues predominate over residues 94 to 112 (EGSKEESHMVVKEKRKGDH).

The protein resides in the secreted. This is an uncharacterized protein from Homo sapiens (Human).